A 279-amino-acid chain; its full sequence is Protoheme IX farnesyltransferase (279 aa).

9 helical membrane passes run 1-21 (MIKPGIILGNIICLSGGFFLA), 29-49 (IFFLKTVFGLILIISSSCILN), 79-99 (ILFFFSIILLILGLLVFYIYI), 101-121 (FLCTIISFFGFFFYVYLYSYL), 128-148 (FSTFVGSVSGSLPPIIGYVAV), 156-176 (CTILFFMFSFWQIAHSYSIII), 200-220 (IIFISICILNLFFFNFLLYFF), 225-245 (FFYFLYTSFFIFLWFIFSFLS), and 254-274 (IWSRIMFFFSIFIIFMISFLM).

It belongs to the UbiA prenyltransferase family. Protoheme IX farnesyltransferase subfamily.

The protein localises to the cell membrane. It carries out the reaction heme b + (2E,6E)-farnesyl diphosphate + H2O = Fe(II)-heme o + diphosphate. The protein operates within porphyrin-containing compound metabolism; heme O biosynthesis; heme O from protoheme: step 1/1. Converts heme B (protoheme IX) to heme O by substitution of the vinyl group on carbon 2 of heme B porphyrin ring with a hydroxyethyl farnesyl side group. This Buchnera aphidicola subsp. Cinara cedri (strain Cc) protein is Protoheme IX farnesyltransferase.